The following is a 72-amino-acid chain: uncharacterized protein (72 aa).

Positions 1–22 (MQSNFIFATLLVLLSLLTFTYA) are cleaved as a signal peptide. Residues 23–28 (SGSSSM) are Extracellular-facing. Residues 29 to 49 (TSSSMPMFGGAIVAAFAFAIF) form a helical membrane-spanning segment. The Cytoplasmic segment spans residues 50 to 72 (SRLAQNFAPRAIFSLLPYHSVSC).

Its subcellular location is the membrane. This is an uncharacterized protein from Dictyostelium discoideum (Social amoeba).